The primary structure comprises 413 residues: PAB1-binding protein 2 (413 aa).

The segment covering 1–23 (MSTETTKPSITTTPTTVLVSPNT) has biased composition (low complexity). The interval 1–36 (MSTETTKPSITTTPTTVLVSPNTLKRKKGEDTSEEQ) is disordered. KH domains follow at residues 66–130 (DVHL…YGMI), 148–213 (EISI…TFYI), and 330–394 (FVQQ…IMLI).

In terms of assembly, interacts with PAB1.

The protein localises to the nucleus. This Saccharomyces cerevisiae (strain ATCC 204508 / S288c) (Baker's yeast) protein is PAB1-binding protein 2 (PBP2).